The primary structure comprises 486 residues: Glutamyl-tRNA(Gln) amidotransferase subunit A (486 aa).

Residues lysine 80 and serine 155 each act as charge relay system in the active site. The Acyl-ester intermediate role is filled by serine 179.

It belongs to the amidase family. GatA subfamily. As to quaternary structure, heterotrimer of A, B and C subunits.

It carries out the reaction L-glutamyl-tRNA(Gln) + L-glutamine + ATP + H2O = L-glutaminyl-tRNA(Gln) + L-glutamate + ADP + phosphate + H(+). Its function is as follows. Allows the formation of correctly charged Gln-tRNA(Gln) through the transamidation of misacylated Glu-tRNA(Gln) in organisms which lack glutaminyl-tRNA synthetase. The reaction takes place in the presence of glutamine and ATP through an activated gamma-phospho-Glu-tRNA(Gln). This Geobacillus sp. (strain WCH70) protein is Glutamyl-tRNA(Gln) amidotransferase subunit A.